A 373-amino-acid polypeptide reads, in one-letter code: Dual-specificity RNA methyltransferase RlmN (373 aa).

The active-site Proton acceptor is the Glu94. A Radical SAM core domain is found at 100–339 (EDDRATLCVS…VIVRKTRGDD (240 aa)). An intrachain disulfide couples Cys107 to Cys344. [4Fe-4S] cluster-binding residues include Cys114, Cys118, and Cys121. Residues 168 to 169 (GE), Ser200, 222 to 224 (SIH), and Asn301 each bind S-adenosyl-L-methionine. Cys344 functions as the S-methylcysteine intermediate in the catalytic mechanism.

This sequence belongs to the radical SAM superfamily. RlmN family. The cofactor is [4Fe-4S] cluster.

The protein localises to the cytoplasm. It catalyses the reaction adenosine(2503) in 23S rRNA + 2 reduced [2Fe-2S]-[ferredoxin] + 2 S-adenosyl-L-methionine = 2-methyladenosine(2503) in 23S rRNA + 5'-deoxyadenosine + L-methionine + 2 oxidized [2Fe-2S]-[ferredoxin] + S-adenosyl-L-homocysteine. It carries out the reaction adenosine(37) in tRNA + 2 reduced [2Fe-2S]-[ferredoxin] + 2 S-adenosyl-L-methionine = 2-methyladenosine(37) in tRNA + 5'-deoxyadenosine + L-methionine + 2 oxidized [2Fe-2S]-[ferredoxin] + S-adenosyl-L-homocysteine. Specifically methylates position 2 of adenine 2503 in 23S rRNA and position 2 of adenine 37 in tRNAs. m2A2503 modification seems to play a crucial role in the proofreading step occurring at the peptidyl transferase center and thus would serve to optimize ribosomal fidelity. In Shewanella baltica (strain OS223), this protein is Dual-specificity RNA methyltransferase RlmN.